A 375-amino-acid polypeptide reads, in one-letter code: Putrescine N-methyltransferase 1 (375 aa).

Polar residues-rich tracts occupy residues 24-50 and 57-77; these read HQNG…QNGT and HQNG…GNEL. Residues 24–77 form a disordered region; that stretch reads HQNGTSEHLNGYQNGTSKHQNGHQNGTFEHRNGHQNGTSEQQNGTISHDNGNEL. The 238-residue stretch at 86–323 folds into the PABS domain; the sequence is PGWFSEFSAL…GVIGYMLCST (238 aa). S-adenosyl-L-methionine is bound by residues Q117, E192, and 223 to 224; that span reads DG. D242 serves as the catalytic Proton acceptor. Y311 contributes to the S-adenosyl-L-methionine binding site.

This sequence belongs to the class I-like SAM-binding methyltransferase superfamily. Putrescine methyltransferase family. In terms of tissue distribution, predominantly expressed in roots.

It catalyses the reaction putrescine + S-adenosyl-L-methionine = N-methylputrescine + S-adenosyl-L-homocysteine + H(+). It functions in the pathway alkaloid biosynthesis; nicotine biosynthesis. Involved in the biosynthesis of pyridine alkaloid natural products, leading mainly to the production of anabasine, anatabine, nicotine and nornicotine, effective deterrents against herbivores with antiparasitic and pesticide properties (neurotoxins); nornicotine serves as the precursor in the synthesis of the carcinogen compound N'-nitrosonornicotine (NNN). Methyltransferase that mediates the conversion of putrescine to N-methylputrescine. Promotes leaves ripening. In Nicotiana tabacum (Common tobacco), this protein is Putrescine N-methyltransferase 1.